The sequence spans 328 residues: Endochitinase (328 aa).

The first 27 residues, 1–27, serve as a signal peptide directing secretion; sequence MKKNRMMMMIWSVGVVWMLLLVGGSYG. The Chitin-binding type-1 domain occupies 28-68; that stretch reads EQCGRQAGGALCPGGNCCSQFGWCGSTTDYCGPGCQSQCGG. 7 cysteine pairs are disulfide-bonded: C30/C45, C39/C51, C44/C58, C62/C66, C97/C159, C170/C178, and C277/C309. The Proton donor role is filled by E141. The propeptide at 318–328 is removed in mature form; it reads SLLLSDLVTSQ.

This sequence belongs to the glycosyl hydrolase 19 family. Chitinase class I subfamily.

The protein resides in the vacuole. It catalyses the reaction Random endo-hydrolysis of N-acetyl-beta-D-glucosaminide (1-&gt;4)-beta-linkages in chitin and chitodextrins.. Its function is as follows. Defense against chitin-containing fungal pathogens. The chain is Endochitinase from Phaseolus vulgaris (Kidney bean).